Consider the following 216-residue polypeptide: Gas vesicle protein H (216 aa).

Residues 1–141 (MSPNLNGPGG…IHIETRETDD (141 aa)) are disordered. Acidic residues predominate over residues 15-25 (DRPDEPDDSDR). Basic and acidic residues-rich tracts occupy residues 38–51 (PDDR…RPSD), 73–84 (DGHRQGHGRIDR), and 107–141 (KPSD…ETDD).

This sequence belongs to the gas vesicle GvpH family. As to quaternary structure, gvpF to GvpM interact with each other in vitro, and may form multi-subunit complex(es). Interacts with GvpC. Might interact with GvpA.

The protein resides in the gas vesicle. Proteins GvpF to GvpM might be involved in nucleating gas vesicle formation. A minor component of the gas vesicle. Gas vesicles are hollow, gas filled proteinaceous nanostructures found in some microorganisms. They allow positioning of halobacteria at the optimal depth for growth in the poorly aerated, shallow brine pools of their habitat. Its function is as follows. Expression of a 9.5 kb mc-vac DNA fragment containing 2 divergently transcribed regions (gvpD-gvpE-gvpF-gvpG-gvpH-gvpI-gvpJ-gvpK-gvpL-gvpM and gvpA-gvpC-gvpN-gvpO) allows H.volcanii to produce gas vesicles. The sequence is that of Gas vesicle protein H from Haloferax mediterranei (strain ATCC 33500 / DSM 1411 / JCM 8866 / NBRC 14739 / NCIMB 2177 / R-4) (Halobacterium mediterranei).